The primary structure comprises 526 residues: Dual specificity tyrosine-phosphorylation-regulated kinase 2 (526 aa).

2 stretches are compositionally biased toward polar residues: residues 30–40 and 60–70; these read TTQPNGLTTLG and GSSSSLKSTDG. Residues 30–76 are disordered; sequence TTQPNGLTTLGKSGLPVVQDRQSESAHRRQGSSSSLKSTDGTGKVKA. The residue at position 31 (threonine 31) is a Phosphothreonine; by ATM. A Nuclear localization signal motif is present at residues 114–116; the sequence is KKR. The Protein kinase domain occupies 147–460; that stretch reads YEVLKVIGKG…PSQALRHPWL (314 aa). ATP-binding positions include 153-161, lysine 176, and 226-229; these read IGKGSFGQV and FELL. The active-site Proton acceptor is the aspartate 273. Tyrosine 307 is modified (phosphotyrosine). Serine 367 is subject to Phosphoserine; by ATM. A disordered region spans residues 462 to 499; it reads RRLPKPPTGEKASAKRITESTGAITSISKLPPTSSSAS. A compositionally biased stretch (polar residues) spans 480-499; that stretch reads ESTGAITSISKLPPTSSSAS.

This sequence belongs to the protein kinase superfamily. CMGC Ser/Thr protein kinase family. MNB/DYRK subfamily. In terms of assembly, interacts with MDM2. Mg(2+) serves as cofactor. Mn(2+) is required as a cofactor. Phosphorylated on serine/threonine residues. Phosphorylation on Thr-31 and Ser-367 by ATM in response to genotoxic stress disrupts MDM2 binding and prevents MDM2-mediated ubiquitination and subsequent proteasome degradation, thus promoting p53/TP53-mediated apoptosis. Post-translationally, ubiquitination in nucleus by MDM2 in normal conditions leads to proteasome degradation.

The protein resides in the cytoplasm. It is found in the nucleus. The enzyme catalyses L-seryl-[protein] + ATP = O-phospho-L-seryl-[protein] + ADP + H(+). It carries out the reaction L-threonyl-[protein] + ATP = O-phospho-L-threonyl-[protein] + ADP + H(+). The catalysed reaction is L-tyrosyl-[protein] + ATP = O-phospho-L-tyrosyl-[protein] + ADP + H(+). Its activity is regulated as follows. Autophosphorylates on tyrosine residues. In terms of biological role, serine/threonine-protein kinase involved in the control of mitotic transition and the regulation of cellular growth and/or development. The protein is Dual specificity tyrosine-phosphorylation-regulated kinase 2 of Gallus gallus (Chicken).